The sequence spans 429 residues: MFS-type efflux pump MSMEG_3705 (429 aa).

The next 12 helical transmembrane spans lie at 21–41, 59–79, 86–106, 115–137, 150–170, 181–201, 228–248, 264–284, 299–319, 327–347, 361–381, and 397–417; these read AWAAVGVLALVGTLNYVDRFL, AIGVINGFGFLIVYAVMGIAV, GAFGAVVAGCLTLWGTMTMLG, LALTRVGVAIGEAGSTPAAHAYV, LAVITIAIPLASTASLLGGGL, FVIMGAVSVVLAPLVLLVVGV, FLIVVAGTAFISAAGYSLTTF, VGVEYGLATGAIGVLGLLIVG, LWIVVTLTLVLLPASVLAFVV, LFLALSYAIGTSYLAPSIAAI, AMFLFFNAVFGSVGPFVVGML, and ALLLLVAAMQLVGAICYWLAS.

Belongs to the major facilitator superfamily.

Its subcellular location is the cell inner membrane. Probably plays a role in bacterial growth and resistance to antibiotics. This Mycolicibacterium smegmatis (strain ATCC 700084 / mc(2)155) (Mycobacterium smegmatis) protein is MFS-type efflux pump MSMEG_3705.